We begin with the raw amino-acid sequence, 185 residues long: Methanol dehydrogenase activator (185 aa).

The protein belongs to the Nudix hydrolase family. In terms of assembly, homodimer. The cofactor is Mg(2+).

Functionally, involved in the activation of the NAD-dependent methanol dehydrogenase (MDH). MDH activation by Act involves hydrolytic removal of the nicotinamide mononucleotide (NMN) moiety of the NAD cofactor, changing its ping-pong type of reaction mechanism into a ternary complex reaction mechanism. It requires the presence of magnesium ions and is also able to use ADP-ribose. The chain is Methanol dehydrogenase activator from Bacillus methanolicus.